We begin with the raw amino-acid sequence, 227 residues long: NAD(P)H-quinone oxidoreductase subunit K, chloroplastic (227 aa).

Positions 43, 44, 108, and 139 each coordinate [4Fe-4S] cluster.

It belongs to the complex I 20 kDa subunit family. NDH is composed of at least 16 different subunits, 5 of which are encoded in the nucleus. The cofactor is [4Fe-4S] cluster.

It localises to the plastid. The protein resides in the chloroplast thylakoid membrane. It catalyses the reaction a plastoquinone + NADH + (n+1) H(+)(in) = a plastoquinol + NAD(+) + n H(+)(out). The catalysed reaction is a plastoquinone + NADPH + (n+1) H(+)(in) = a plastoquinol + NADP(+) + n H(+)(out). Its function is as follows. NDH shuttles electrons from NAD(P)H:plastoquinone, via FMN and iron-sulfur (Fe-S) centers, to quinones in the photosynthetic chain and possibly in a chloroplast respiratory chain. The immediate electron acceptor for the enzyme in this species is believed to be plastoquinone. Couples the redox reaction to proton translocation, and thus conserves the redox energy in a proton gradient. The sequence is that of NAD(P)H-quinone oxidoreductase subunit K, chloroplastic from Citrus sinensis (Sweet orange).